Reading from the N-terminus, the 326-residue chain is Cytosolic sulfotransferase 7 (326 aa).

Position 72–77 (72–77 (KSGTTW)) interacts with 3'-phosphoadenylyl sulfate. His138 (proton acceptor) is an active-site residue. Residues Arg160, Ser168, Tyr226, and 292–294 (RKG) each bind 3'-phosphoadenylyl sulfate.

This sequence belongs to the sulfotransferase 1 family.

Its subcellular location is the cytoplasm. Its function is as follows. Sulfotransferase that utilizes 3'-phospho-5'-adenylyl sulfate (PAPS) as sulfonate donor. This Arabidopsis thaliana (Mouse-ear cress) protein is Cytosolic sulfotransferase 7 (SOT7).